The sequence spans 388 residues: Succinate--CoA ligase [ADP-forming] subunit beta (388 aa).

Residues 9–244 enclose the ATP-grasp domain; it reads KQLFAEFGLP…PSQEDEREAH (236 aa). ATP contacts are provided by residues Lys-46, 53–55, Glu-99, Ser-102, and Glu-107; that span reads GRG. Mg(2+) contacts are provided by Asn-199 and Asp-213. Residues Asn-264 and 321–323 each bind substrate; that span reads GIV.

This sequence belongs to the succinate/malate CoA ligase beta subunit family. In terms of assembly, heterotetramer of two alpha and two beta subunits. Mg(2+) serves as cofactor.

It carries out the reaction succinate + ATP + CoA = succinyl-CoA + ADP + phosphate. It catalyses the reaction GTP + succinate + CoA = succinyl-CoA + GDP + phosphate. The protein operates within carbohydrate metabolism; tricarboxylic acid cycle; succinate from succinyl-CoA (ligase route): step 1/1. Its function is as follows. Succinyl-CoA synthetase functions in the citric acid cycle (TCA), coupling the hydrolysis of succinyl-CoA to the synthesis of either ATP or GTP and thus represents the only step of substrate-level phosphorylation in the TCA. The beta subunit provides nucleotide specificity of the enzyme and binds the substrate succinate, while the binding sites for coenzyme A and phosphate are found in the alpha subunit. The polypeptide is Succinate--CoA ligase [ADP-forming] subunit beta (Vibrio atlanticus (strain LGP32) (Vibrio splendidus (strain Mel32))).